A 262-amino-acid chain; its full sequence is Hydroxyethylthiazole kinase (262 aa).

Met43 lines the substrate pocket. Residues Arg118 and Thr164 each coordinate ATP. Residue Ala191 coordinates substrate.

Belongs to the Thz kinase family. Mg(2+) is required as a cofactor.

It carries out the reaction 5-(2-hydroxyethyl)-4-methylthiazole + ATP = 4-methyl-5-(2-phosphooxyethyl)-thiazole + ADP + H(+). The protein operates within cofactor biosynthesis; thiamine diphosphate biosynthesis; 4-methyl-5-(2-phosphoethyl)-thiazole from 5-(2-hydroxyethyl)-4-methylthiazole: step 1/1. In terms of biological role, catalyzes the phosphorylation of the hydroxyl group of 4-methyl-5-beta-hydroxyethylthiazole (THZ). The chain is Hydroxyethylthiazole kinase from Cereibacter sphaeroides (strain ATCC 17023 / DSM 158 / JCM 6121 / CCUG 31486 / LMG 2827 / NBRC 12203 / NCIMB 8253 / ATH 2.4.1.) (Rhodobacter sphaeroides).